An 85-amino-acid polypeptide reads, in one-letter code: Large ribosomal subunit protein bL27 (85 aa).

Positions 1–23 (MAHKKAGGSSRNGRDSESKRLGV) are disordered.

This sequence belongs to the bacterial ribosomal protein bL27 family.

The chain is Large ribosomal subunit protein bL27 from Methylococcus capsulatus (strain ATCC 33009 / NCIMB 11132 / Bath).